The primary structure comprises 91 residues: Small ribosomal subunit protein uS15c (91 aa).

This sequence belongs to the universal ribosomal protein uS15 family. Part of the 30S ribosomal subunit.

It localises to the plastid. The protein resides in the chloroplast. This chain is Small ribosomal subunit protein uS15c (rps15), found in Eucalyptus globulus subsp. globulus (Tasmanian blue gum).